Consider the following 209-residue polypeptide: MKKAILGKKLGMTQIFNENGKVIPVTVIEAGPCTVIQKKTVEKDGYEAIQVAFGDIREKLRNKPVKGHFAKAGVSVKRHIKEFKLEDLNSLEIGQEIKADVFEAGERVDISGVSKGKGFQGTIRRWNAHRGPMSHGSKFHRAVGSMGASSDPSRTFKNKRMPGHMGNVNTTVLNLEVVRIIPEKNLILIKGGVPGPNKGLVQIRNTVKA.

Residues 141 to 163 (RAVGSMGASSDPSRTFKNKRMPG) form a disordered region.

The protein belongs to the universal ribosomal protein uL3 family. In terms of assembly, part of the 50S ribosomal subunit. Forms a cluster with proteins L14 and L19.

In terms of biological role, one of the primary rRNA binding proteins, it binds directly near the 3'-end of the 23S rRNA, where it nucleates assembly of the 50S subunit. The protein is Large ribosomal subunit protein uL3 of Clostridium botulinum (strain Kyoto / Type A2).